The primary structure comprises 399 residues: Accessory Sec system protein translocase subunit SecY2 (399 aa).

The next 10 membrane-spanning stretches (helical) occupy residues 14-34 (IFFT…SIVS), 60-80 (LNIF…LTLI), 102-122 (ALTL…YINK), 128-148 (SNML…VWLA), 152-172 (TTYG…KSIF), 183-203 (ASLI…LFFI), 237-257 (ISIM…NFIG), 272-292 (FTNP…GYFL), 335-355 (WFGS…ALLV), and 362-382 (VYFT…AETI).

Belongs to the SecY/SEC61-alpha family. SecY2 subfamily. As to quaternary structure, component of the accessory SecA2/SecY2 protein translocase complex required to export cell wall proteins. May form heterotrimers with SecE and SecG subunits.

The protein localises to the cell membrane. Part of the accessory SecA2/SecY2 system specifically required for export of possible cell wall proteins. The central subunit of a protein translocation channel. The protein is Accessory Sec system protein translocase subunit SecY2 of Staphylococcus epidermidis (strain ATCC 12228 / FDA PCI 1200).